The chain runs to 422 residues: 3-carboxy-cis,cis-muconate cycloisomerase (422 aa).

This sequence belongs to the class-II fumarase/aspartase family. Homotetramer.

The protein resides in the cytoplasm. The catalysed reaction is 2-(carboxymethyl)-5-oxo-2,5-dihydro-2-furoate = 3-carboxy-cis,cis-muconate + H(+). It participates in aromatic compound metabolism; beta-ketoadipate pathway; 5-oxo-4,5-dihydro-2-furylacetate from 3-carboxy-cis,cis-muconate: step 1/2. Its function is as follows. Catalyzes an anti cycloisomerization. This Pseudomonas putida (Arthrobacter siderocapsulatus) protein is 3-carboxy-cis,cis-muconate cycloisomerase (pcaB).